A 240-amino-acid chain; its full sequence is Uridylate kinase (240 aa).

Position 13–16 (13–16 (KLSG)) interacts with ATP. The interval 21–26 (GDKGFG) is involved in allosteric activation by GTP. A UMP-binding site is contributed by Gly-55. Residues Gly-56 and Arg-60 each contribute to the ATP site. Residues Asp-75 and 136-143 (IGNPYFST) each bind UMP. ATP contacts are provided by Asn-164, Tyr-170, and Asp-173.

Belongs to the UMP kinase family. Homohexamer.

Its subcellular location is the cytoplasm. The catalysed reaction is UMP + ATP = UDP + ADP. It functions in the pathway pyrimidine metabolism; CTP biosynthesis via de novo pathway; UDP from UMP (UMPK route): step 1/1. Its activity is regulated as follows. Allosterically activated by GTP. Inhibited by UTP. Functionally, catalyzes the reversible phosphorylation of UMP to UDP. This is Uridylate kinase from Staphylococcus haemolyticus (strain JCSC1435).